Reading from the N-terminus, the 1161-residue chain is ATP-dependent helicase/deoxyribonuclease subunit B (1161 aa).

The protein belongs to the helicase family. AddB/RexB type 2 subfamily. Heterodimer of AddA and RexB. Mg(2+) serves as cofactor.

The heterodimer acts as both an ATP-dependent DNA helicase and an ATP-dependent, dual-direction single-stranded exonuclease. Recognizes the chi site generating a DNA molecule suitable for the initiation of homologous recombination. This subunit has 5' -&gt; 3' nuclease activity but not helicase activity. This Oenococcus oeni (strain ATCC BAA-331 / PSU-1) protein is ATP-dependent helicase/deoxyribonuclease subunit B.